The sequence spans 413 residues: Transcription factor E2F4 (413 aa).

Positions 1 to 20 are disordered; it reads MAEAGPQAPPPPGTPSRHEK. An N-acetylalanine modification is found at A2. Residues 16–85 mediate DNA binding; sequence SRHEKSLGLL…KNSIQWKGVG (70 aa). The leucine-zipper stretch occupies residues 43-65; sequence LKLAADTLAVRQKRRIYDITNVL. The short motif at 48 to 85 is the DEF box element; it reads DTLAVRQKRRIYDITNVLEGIGLIEKKSKNSIQWKGVG. Residues 86-181 form a dimerization region; the sequence is PGCNTREIAD…GLNGQKKYQI (96 aa). Residues 211–340 form a disordered region; sequence PPEDLLQSPS…PSTSFEPIKA (130 aa). Composition is skewed to polar residues over residues 234–249 and 293–306; these read AQSQEASRPNSPQLTP and TLDTRPLQSSALLD. Residues 307 to 327 are compositionally biased toward low complexity; that stretch reads SSSSSSSSSSSSSNSNSSSSS. The segment at 337–413 is transactivation; sequence PIKADPTGVL…DLFDVPVLNL (77 aa). S384 bears the Phosphoserine mark. The HCFC1-binding-motif (HBM) motif lies at 389–392; the sequence is DHDY. An interaction with RBL1 and RBL2 region spans residues 390 to 407; it reads HDYIYNLDESEGVCDLFD.

Belongs to the E2F/DP family. Component of the DRTF1/E2F transcription factor complex. Binds cooperatively with TFDP1/Dp-1 to E2F sites. The E2F4/TFDP1 dimer interacts preferentially with pocket protein RBL1, which inhibits the E2F transactivation domain. Lower affinity interaction has been found with retinoblastoma protein RB1. Interacts with TRRAP, which probably mediates its interaction with histone acetyltransferase complexes, leading to transcription activation. Interacts with HCFC1. Component of the DREAM complex (also named LINC complex) at least composed of E2F4, E2F5, LIN9, LIN37, LIN52, LIN54, MYBL1, MYBL2, RBL1, RBL2, RBBP4, TFDP1 and TFDP2. The complex exists in quiescent cells where it represses cell cycle-dependent genes. It dissociates in S phase when LIN9, LIN37, LIN52 and LIN54 form a subcomplex that binds to MYBL2. Interacts with PML (isoform PML-1, isoform PML-2, isoform PML-3, isoform PML-4 and isoform PML-5). Interacts with CEBPA (when phosphorylated). Post-translationally, differentially phosphorylated in vivo. Found in all tissue examined including heart, brain, placenta, lung, liver, skeletal muscle, kidney and pancreas.

Its subcellular location is the nucleus. Its function is as follows. Transcription activator that binds DNA cooperatively with DP proteins through the E2 recognition site, 5'-TTTC[CG]CGC-3' found in the promoter region of a number of genes whose products are involved in cell cycle regulation or in DNA replication. The DRTF1/E2F complex functions in the control of cell-cycle progression from G1 to S phase. E2F4 binds with high affinity to RBL1 and RBL2. In some instances can also bind RB1. Specifically required for multiciliate cell differentiation: together with MCIDAS and E2F5, binds and activate genes required for centriole biogenesis. The sequence is that of Transcription factor E2F4 (E2F4) from Homo sapiens (Human).